The chain runs to 285 residues: Bifunctional protein FolD (285 aa).

Residues 166–168 (GAS), serine 191, and isoleucine 232 each bind NADP(+).

Belongs to the tetrahydrofolate dehydrogenase/cyclohydrolase family. Homodimer.

It catalyses the reaction (6R)-5,10-methylene-5,6,7,8-tetrahydrofolate + NADP(+) = (6R)-5,10-methenyltetrahydrofolate + NADPH. It carries out the reaction (6R)-5,10-methenyltetrahydrofolate + H2O = (6R)-10-formyltetrahydrofolate + H(+). It participates in one-carbon metabolism; tetrahydrofolate interconversion. Functionally, catalyzes the oxidation of 5,10-methylenetetrahydrofolate to 5,10-methenyltetrahydrofolate and then the hydrolysis of 5,10-methenyltetrahydrofolate to 10-formyltetrahydrofolate. This Edwardsiella ictaluri (strain 93-146) protein is Bifunctional protein FolD.